The primary structure comprises 720 residues: Pro-neuregulin-3, membrane-bound isoform (720 aa).

At 1-360 (MSEGAAAASP…MESEEVYQRQ (360 aa)) the chain is on the extracellular side. Disordered stretches follow at residues 28 to 48 (AAAA…AAEP), 119 to 223 (SSFP…AMPS), and 246 to 280 (PFQD…TTYS). Gly residues predominate over residues 34-44 (AGGGPDGGGEG). Positions 127 to 148 (TTTTTTSTTSPATPSAGGAASS) are enriched in low complexity. Polar residues predominate over residues 149-163 (RTPNRISTRLTTITR). Low complexity-rich tracts occupy residues 187 to 205 (TAAP…SSST) and 250 to 271 (AASS…TSTS). The region spanning 286–329 (HFKPCRDKDLAYCLNDGECFVIETLTGSHKHCRCKEGYQGVRCD) is the EGF-like domain. 3 cysteine pairs are disulfide-bonded: Cys290–Cys304, Cys298–Cys317, and Cys319–Cys328. A helical membrane pass occupies residues 361–381 (VLSISCIIFGIVIVGMFCAAF). The Cytoplasmic portion of the chain corresponds to 382–720 (YFKSKKQAKQ…EIQRDSALTK (339 aa)). The interval 451–481 (PQSFPEVPSPDRGSQSVKHHRSLSSCCSPGQ) is disordered.

Belongs to the neuregulin family. Interacts with ERBB4. In terms of processing, proteolytic cleavage close to the plasma membrane on the external face leads to the release of the soluble growth factor form. Extensive glycosylation precedes the proteolytic cleavage. Isoform 3 is glycosylated. In terms of tissue distribution, highly expressed in most regions of the brain with the exception of corpus callosum. Expressed at lower level in testis. Not detected in heart, placenta, lung, liver, skeletal muscle, kidney, pancreas, spleen, thymus, prostate, ovary, small intestine, colon and peripheral blood leukocytes.

The protein localises to the cell membrane. The protein resides in the secreted. Direct ligand for the ERBB4 tyrosine kinase receptor. Binding results in ligand-stimulated tyrosine phosphorylation and activation of the receptor. Does not bind to the EGF receptor, ERBB2 or ERBB3 receptors. May be a survival factor for oligodendrocytes. In Homo sapiens (Human), this protein is Pro-neuregulin-3, membrane-bound isoform (NRG3).